The sequence spans 406 residues: MKRAFILVLDSFGIGATADAQAFGDVGSDTLGHIADQCAQGLADNAERKGALQLPNLSKLGLAMAHKESTGRFAPGLDERADIIGAYAHAAELSSGKDTPSGHWEIAGVPVLFEWGYFSDKQNSFPKELTDRILARAGLDGFLGNCHASGTQVLDDLGEEHMRTGKPIFYTSADSVFQIACHEETFGLARLLELCQIAREELADYNIGRVIARPFVGPGKGQFARTGNRRDLSVEPPSATVLQKLVEEKQGRVVSIGKIADIYAYCGITDKVKATGIPDLFEATLEQIKQAGDNTIVFTNFVDFDSAYGHRRDVAGYAAALEYFDKRLPEVLALMQEDDILILTADHGCDPTWPGTDHTREHIPVLVYGKKVAPGSLGRRDTFADIGQTLASYFGTSPMDYGKNFL.

Mn(2+) contacts are provided by Asp10, Asp305, His310, Asp346, His347, and His358.

Belongs to the phosphopentomutase family. The cofactor is Mn(2+).

It localises to the cytoplasm. It carries out the reaction 2-deoxy-alpha-D-ribose 1-phosphate = 2-deoxy-D-ribose 5-phosphate. The enzyme catalyses alpha-D-ribose 1-phosphate = D-ribose 5-phosphate. It functions in the pathway carbohydrate degradation; 2-deoxy-D-ribose 1-phosphate degradation; D-glyceraldehyde 3-phosphate and acetaldehyde from 2-deoxy-alpha-D-ribose 1-phosphate: step 1/2. Isomerase that catalyzes the conversion of deoxy-ribose 1-phosphate (dRib-1-P) and ribose 1-phosphate (Rib-1-P) to deoxy-ribose 5-phosphate (dRib-5-P) and ribose 5-phosphate (Rib-5-P), respectively. The chain is Phosphopentomutase from Vibrio cholerae serotype O1 (strain ATCC 39541 / Classical Ogawa 395 / O395).